The following is a 205-amino-acid chain: uncharacterized protein (205 aa).

This is an uncharacterized protein from Sinorhizobium fredii (strain NBRC 101917 / NGR234).